Consider the following 495-residue polypeptide: MKRSALLASFLPLALGCDSAETHSCASAFSVSSAAAASFCATFTASTVTATTGVPDVFLSNCDYKTKHLSSACSCLGTADGSAPASTPAAPAVSSSSKVGKAPAVAATRTSAIPTTFHTTAVRVPLSTSAAAAVTSQAVLPAQSSVAGNGGTTCTVTEYASISSAVASCSNILLSNINAPASSTIDLTGLQTGAAVIFAGETTFGDTYDSDFDPIVISGTDVTITGEEGHVINGNGEAYWDGEGSNGGQDKPDHFIVVKDMYNSKIENLNILNWPVHCFEIENTEYLTISGLILNNTAGDAANSKSDGDPAAHNTDGFDIKQSDFLTLSNSWVHNQDDCVAVTSGSSIVVDNLYCYGGHGLSIGSIGGKSNNTVDGVTFSNSQVINSENGCRIKSNADTTGEVYNVKYENITLSGISDYGIDIQQDYENGGATGDPTNGVKIENISFVNVKGTMSDGKDYYILCGDGSCSNFVFTDVDITGGSDDSCNYPSSGCP.

The signal sequence occupies residues 1–16; sequence MKRSALLASFLPLALG. Cysteines 154 and 169 form a disulfide. PbH1 repeat units lie at residues 261–283, 284–322, and 323–344; these read MYNS…EIEN, TEYL…DIKQ, and SDFL…AVTS. N-linked (GlcNAc...) asparagine glycosylation is present at Asn295. Asp337 functions as the Proton donor in the catalytic mechanism. Cys339 and Cys355 are joined by a disulfide. The active site involves His359. A glycan (N-linked (GlcNAc...) asparagine) is linked at Asn371. PbH1 repeat units lie at residues 374–395 and 403–425; these read VDGV…RIKS and VYNV…DIQQ. Asn410 and Asn444 each carry an N-linked (GlcNAc...) asparagine glycan. 2 cysteine pairs are disulfide-bonded: Cys464/Cys469 and Cys487/Cys494. Residues 469–492 form a PbH1 6 repeat; the sequence is CSNFVFTDVDITGGSDDSCNYPSS.

Belongs to the glycosyl hydrolase 28 family.

Its subcellular location is the secreted. The enzyme catalyses (1,4-alpha-D-galacturonosyl)n+m + H2O = (1,4-alpha-D-galacturonosyl)n + (1,4-alpha-D-galacturonosyl)m.. Functionally, involved in maceration and soft-rotting of plant tissue. Hydrolyzes the 1,4-alpha glycosidic bonds of de-esterified pectate in the smooth region of the plant cell wall. The polypeptide is Probable endopolygalacturonase D (pgaD) (Aspergillus niger (strain ATCC MYA-4892 / CBS 513.88 / FGSC A1513)).